The sequence spans 174 residues: Cytochrome c-type biogenesis protein CcmE (174 aa).

At 1-8 the chain is on the cytoplasmic side; the sequence is MNPRRKSR. Residues 9 to 29 traverse the membrane as a helical; Signal-anchor for type II membrane protein segment; the sequence is LSVVLFIFLGISVASALVLYA. At 30–174 the chain is on the periplasmic side; that stretch reads LRQNIDLFYT…QEKQFKEGNQ (145 aa). Heme is bound by residues H131 and Y135. The segment at 149-174 is disordered; it reads KPMGISDLKNESDRDRQEKQFKEGNQ. Residues 156-174 are compositionally biased toward basic and acidic residues; that stretch reads LKNESDRDRQEKQFKEGNQ.

It belongs to the CcmE/CycJ family.

It localises to the cell inner membrane. Its function is as follows. Heme chaperone required for the biogenesis of c-type cytochromes. Transiently binds heme delivered by CcmC and transfers the heme to apo-cytochromes in a process facilitated by CcmF and CcmH. This is Cytochrome c-type biogenesis protein CcmE from Histophilus somni (strain 129Pt) (Haemophilus somnus).